Here is a 267-residue protein sequence, read N- to C-terminus: UPF0162 protein HI_1558 (267 aa).

This sequence belongs to the UPF0162 family.

The sequence is that of UPF0162 protein HI_1558 from Haemophilus influenzae (strain ATCC 51907 / DSM 11121 / KW20 / Rd).